The primary structure comprises 562 residues: Sulfite reductase [NADPH] hemoprotein beta-component (562 aa).

[4Fe-4S] cluster-binding residues include Cys-425, Cys-431, Cys-470, and Cys-474. Residue Cys-474 participates in siroheme binding.

This sequence belongs to the nitrite and sulfite reductase 4Fe-4S domain family. As to quaternary structure, alpha(8)-beta(8). The alpha component is a flavoprotein, the beta component is a hemoprotein. It depends on siroheme as a cofactor. [4Fe-4S] cluster serves as cofactor.

The catalysed reaction is hydrogen sulfide + 3 NADP(+) + 3 H2O = sulfite + 3 NADPH + 4 H(+). It functions in the pathway sulfur metabolism; hydrogen sulfide biosynthesis; hydrogen sulfide from sulfite (NADPH route): step 1/1. Functionally, component of the sulfite reductase complex that catalyzes the 6-electron reduction of sulfite to sulfide. This is one of several activities required for the biosynthesis of L-cysteine from sulfate. The chain is Sulfite reductase [NADPH] hemoprotein beta-component from Tolumonas auensis (strain DSM 9187 / NBRC 110442 / TA 4).